Here is a 317-residue protein sequence, read N- to C-terminus: tRNA dimethylallyltransferase (317 aa).

14–21 contacts ATP; that stretch reads GPTAVGKT. Position 16 to 21 (16 to 21) interacts with substrate; that stretch reads TAVGKT. Positions 39–42 are interaction with substrate tRNA; the sequence is DSMQ.

This sequence belongs to the IPP transferase family. Monomer. Requires Mg(2+) as cofactor.

It carries out the reaction adenosine(37) in tRNA + dimethylallyl diphosphate = N(6)-dimethylallyladenosine(37) in tRNA + diphosphate. Functionally, catalyzes the transfer of a dimethylallyl group onto the adenine at position 37 in tRNAs that read codons beginning with uridine, leading to the formation of N6-(dimethylallyl)adenosine (i(6)A). The chain is tRNA dimethylallyltransferase from Bacillus cereus (strain ATCC 14579 / DSM 31 / CCUG 7414 / JCM 2152 / NBRC 15305 / NCIMB 9373 / NCTC 2599 / NRRL B-3711).